Reading from the N-terminus, the 138-residue chain is Low molecular weight protein-tyrosine-phosphatase PtpB (138 aa).

Catalysis depends on Cys-7, which acts as the Nucleophile. Arg-13 is a catalytic residue. The Proton donor role is filled by Asp-111.

Belongs to the low molecular weight phosphotyrosine protein phosphatase family.

It carries out the reaction O-phospho-L-tyrosyl-[protein] + H2O = L-tyrosyl-[protein] + phosphate. Its function is as follows. Dephosphorylates the phosphotyrosine-containing proteins. In Staphylococcus haemolyticus (strain JCSC1435), this protein is Low molecular weight protein-tyrosine-phosphatase PtpB (ptpB).